Consider the following 200-residue polypeptide: Recombination protein RecR (200 aa).

The C4-type zinc-finger motif lies at 60 to 75 (CVYCQALTEDDVCNIC). Residues 83–177 (TKLCIIESML…KISRIGFGVP (95 aa)) form the Toprim domain.

The protein belongs to the RecR family.

In terms of biological role, may play a role in DNA repair. It seems to be involved in an RecBC-independent recombinational process of DNA repair. It may act with RecF and RecO. The sequence is that of Recombination protein RecR from Francisella tularensis subsp. mediasiatica (strain FSC147).